The sequence spans 105 residues: Small ribosomal subunit protein uS10 (105 aa).

Belongs to the universal ribosomal protein uS10 family. In terms of assembly, part of the 30S ribosomal subunit.

Its function is as follows. Involved in the binding of tRNA to the ribosomes. This chain is Small ribosomal subunit protein uS10, found in Synechococcus sp. (strain JA-2-3B'a(2-13)) (Cyanobacteria bacterium Yellowstone B-Prime).